The chain runs to 137 residues: Proofreading thioesterase EntH (137 aa).

Glu63 (nucleophile or proton acceptor) is an active-site residue.

Belongs to the thioesterase PaaI family. In terms of assembly, homotetramer. Dimer of dimers. Interacts specifically with the aryl carrier protein (ArCP) domain of EntB.

The protein resides in the cytoplasm. It functions in the pathway siderophore biosynthesis; enterobactin biosynthesis. In terms of biological role, required for optimal enterobactin synthesis. Acts as a proofreading enzyme that prevents EntB misacylation by hydrolyzing the thioester bound existing between EntB and wrongly charged molecules. The protein is Proofreading thioesterase EntH of Cronobacter sakazakii (strain ATCC BAA-894) (Enterobacter sakazakii).